Reading from the N-terminus, the 125-residue chain is Small ribosomal subunit protein uS13 (125 aa).

This sequence belongs to the universal ribosomal protein uS13 family. Part of the 30S ribosomal subunit. Forms a loose heterodimer with protein S19. Forms two bridges to the 50S subunit in the 70S ribosome.

Located at the top of the head of the 30S subunit, it contacts several helices of the 16S rRNA. In the 70S ribosome it contacts the 23S rRNA (bridge B1a) and protein L5 of the 50S subunit (bridge B1b), connecting the 2 subunits; these bridges are implicated in subunit movement. Contacts the tRNAs in the A and P-sites. The polypeptide is Small ribosomal subunit protein uS13 (Gluconacetobacter diazotrophicus (strain ATCC 49037 / DSM 5601 / CCUG 37298 / CIP 103539 / LMG 7603 / PAl5)).